The sequence spans 316 residues: tRNA dimethylallyltransferase (316 aa).

ATP is bound at residue 17–24; that stretch reads GPTASGKT. Substrate is bound at residue 19 to 24; it reads TASGKT. Interaction with substrate tRNA regions lie at residues 42–45, 166–170, and 247–252; these read DSAL, QRLSR, and RCVGYR.

Belongs to the IPP transferase family. As to quaternary structure, monomer. Mg(2+) serves as cofactor.

It carries out the reaction adenosine(37) in tRNA + dimethylallyl diphosphate = N(6)-dimethylallyladenosine(37) in tRNA + diphosphate. Its function is as follows. Catalyzes the transfer of a dimethylallyl group onto the adenine at position 37 in tRNAs that read codons beginning with uridine, leading to the formation of N6-(dimethylallyl)adenosine (i(6)A). The polypeptide is tRNA dimethylallyltransferase (Klebsiella pneumoniae (strain 342)).